Reading from the N-terminus, the 534-residue chain is MEIGTFPWLTTIILLPIVAALFIPLLPDRDGKGTTIRWYSLIVGLVDFILLVVAFWTSYDFSNPDLQLVESYAWVPQIGLNWSVGADGLSMPLILLTGFISTLAMLAAWPVTFKTRFFYFLMLAMYGGQILVFAVQDLLVFFFAWELELIPVYLLLAIWGGKRRQYAATKFILYTAGSSLFILVASLAMAFSGDVISFDFQTLAAKEYAIGFQLLLYAGFLIAYGVKLPIVPLHTWLPDAHGEATAPVHMLLAGILLKMGGYALFRMNAGMLPEAHARFAPILVLLGVVNILYAALTSFAQRNLKRKIAYSSISHMGFVLIGLGSFTQLGLSGSMLQMVSHGLIGASLFFLVGATYDRTHTLMLDEMGGVGQKMRKMFAMWTTCAMASLALPGMSGFVAELMVFVGFATSDAYGLPFKVVVISLAAIGVILTPIYLLSMLREIFFGPENKTLTEHETLVDAEPREVYIIACLLVPIIGIGLYPKLTTQVYDATLVQLTERLRSAVPVIAQQAEASRDRLSHFPGQAHRQAPPLG.

Helical transmembrane passes span 6–26 (FPWL…IPLL), 38–58 (WYSL…FWTS), 93–113 (LILL…PVTF), 117–137 (FFYF…AVQD), 138–158 (LLVF…LLAI), 171–191 (FILY…AMAF), 210–230 (IGFQ…KLPI), 245–265 (TAPV…YALF), 279–299 (FAPI…LTSF), 313–333 (ISHM…GLSG), 335–355 (MLQM…VGAT), 377–399 (MFAM…GFVA), and 419–439 (VVVI…LLSM).

It belongs to the complex I subunit 4 family.

The protein localises to the cellular thylakoid membrane. The enzyme catalyses a plastoquinone + NADH + (n+1) H(+)(in) = a plastoquinol + NAD(+) + n H(+)(out). It carries out the reaction a plastoquinone + NADPH + (n+1) H(+)(in) = a plastoquinol + NADP(+) + n H(+)(out). NDH-1 shuttles electrons from NAD(P)H, via FMN and iron-sulfur (Fe-S) centers, to quinones in the respiratory chain. The immediate electron acceptor for the enzyme in this species is believed to be plastoquinone. Couples the redox reaction to proton translocation (for every two electrons transferred, four hydrogen ions are translocated across the cytoplasmic membrane), and thus conserves the redox energy in a proton gradient. The polypeptide is NAD(P)H-quinone oxidoreductase chain 4 2 (Synechococcus elongatus (strain ATCC 33912 / PCC 7942 / FACHB-805) (Anacystis nidulans R2)).